The following is a 99-amino-acid chain: Plastocyanin (99 aa).

Positions 1–99 (LDVLLGSDDG…AGMVGKVTVN (99 aa)) constitute a Plastocyanin-like domain. Positions 37, 84, 87, and 92 each coordinate Cu cation.

The protein belongs to the plastocyanin family. It depends on Cu(2+) as a cofactor.

The protein resides in the plastid. It localises to the chloroplast thylakoid membrane. Functionally, participates in electron transfer between P700 and the cytochrome b6-f complex in photosystem I. This chain is Plastocyanin (PETE), found in Mercurialis perennis (Dog's mercury).